A 204-amino-acid chain; its full sequence is MTKPQLSYFKVRALGQFPRVLLSYLSIDYDNNYIDKIDENIIDDLKYGQLPLYTDSNGFKLVQSMAISKYIASQHDFVGKTPEEKALVDETLAAVNIDVFTFIIRVFRGVEEKEKIQEIIIPRFFAKWNQILGEKKYLAGGNSYTLADLYVYVAYEYIGYVLPFAADLLYNGKFPHLDSLKEHFESNKGVAEYLKNRPITERKI.

Thr2 is modified (N-acetylthreonine). In terms of domain architecture, GST N-terminal spans Thr2 to Gly79. Glutathione-binding positions include Tyr8, Gln49–Leu50, and Gln63–Ser64. The GST C-terminal domain maps to Thr81–Arg202.

Belongs to the GST superfamily. Alpha family.

The catalysed reaction is RX + glutathione = an S-substituted glutathione + a halide anion + H(+). Its function is as follows. Conjugation of reduced glutathione to a wide number of exogenous and endogenous hydrophobic electrophiles. The protein is Putative glutathione S-transferase alpha-3 (gsta3) of Dictyostelium discoideum (Social amoeba).